Reading from the N-terminus, the 400-residue chain is Phosphoglycerate kinase (400 aa).

Substrate-binding positions include 24–26 (DFN), Arg-40, 63–66 (HFGR), Arg-121, and Arg-154. Residues Lys-205, Gly-296, Glu-327, and 356–359 (GGDS) contribute to the ATP site.

The protein belongs to the phosphoglycerate kinase family. Monomer.

It is found in the cytoplasm. It carries out the reaction (2R)-3-phosphoglycerate + ATP = (2R)-3-phospho-glyceroyl phosphate + ADP. Its pathway is carbohydrate degradation; glycolysis; pyruvate from D-glyceraldehyde 3-phosphate: step 2/5. The chain is Phosphoglycerate kinase from Nostoc punctiforme (strain ATCC 29133 / PCC 73102).